Consider the following 896-residue polypeptide: NEDD4-binding protein 1 (896 aa).

The region spanning 59–143 (QEAVHSAKEY…IQQFVKLFEN (85 aa)) is the KH-like domain. Serine 226 is subject to Phosphoserine. At threonine 242 the chain carries Phosphothreonine. 2 positions are modified to phosphoserine: serine 258 and serine 300. 2 disordered regions span residues 403-430 (YPET…PKKT) and 488-507 (ETDG…VNFV). Over residues 414–430 (VYSSTNELTTDSTPKKT) the composition is skewed to polar residues. Phosphoserine is present on serine 562. The region spanning 617–769 (LKHIVIDGSN…LGRSGPRLEE (153 aa)) is the RNase NYN domain. Positions 801 to 821 (GTQAASTSHQPPTRIQGAPSS) are disordered. A compositionally biased stretch (polar residues) spans 803-813 (QAASTSHQPPT). A coCUN region spans residues 849–896 (RSSAETNELREALLKIFPDSEQRLKIDQILVAHPYMKDLNALSAMVLD).

It belongs to the N4BP1 family. In terms of assembly, interacts with NEDD4. Interacts with ITCH (via WW domain 2). Proteolytically cleaved by CASP8 downstream of TLR3 or TLR4, leading to its inactivation. Mainly cleaved at Asp-490 by CASP8. Cleaved by caspase-like protein MALT1 in T-cells following TCR-mediated activation, leading to its inactivation and subsequent viral reactivation during HIV-1 infection. In terms of processing, mono- and polyubiquitinated on the CoCUN region. Monoubiquitinated by NEDD4. Polyubiquitinated, leading to its degradation by the proteasome. Sumoylated with SUMO1, abrogating polyubiquitination and subsequent degradation. Desumoylated by SENP1, leading to accumulation in PML nuclear bodies. As to expression, detected in heart, lung, brain, liver, skeletal muscle, pancreas, kidney, spleen, testis and ovary.

The protein resides in the cytoplasm. The protein localises to the cytosol. It is found in the nucleus. Its subcellular location is the nucleolus. It localises to the PML body. Proteolytic cleavage by CASP8 or MALT1 leads to its inactivation. Potent suppressor of cytokine production that acts as a regulator of innate immune signaling and inflammation. Acts as a key negative regulator of select cytokine and chemokine responses elicited by TRIF-independent Toll-like receptors (TLRs), thereby limiting inflammatory cytokine responses to minor insults. In response to more threatening pathogens, cleaved by CASP8 downstream of TLR3 or TLR4, leading to its inactivation, thereby allowing production of inflammatory cytokines. Acts as a restriction factor against some viruses, such as HIV-1: restricts HIV-1 replication by binding to HIV-1 mRNAs and mediating their degradation via its ribonuclease activity. Also acts as an inhibitor of the E3 ubiquitin-protein ligase ITCH: acts by interacting with the second WW domain of ITCH, leading to compete with ITCH's substrates and impairing ubiquitination of substrates. The polypeptide is NEDD4-binding protein 1 (Homo sapiens (Human)).